The chain runs to 331 residues: Probable protein phosphatase 2C 72 (331 aa).

Residues 43–324 enclose the PPM-type phosphatase domain; the sequence is LGSVCSIQGT…DDITVICLFL (282 aa). The Mn(2+) site is built by aspartate 78, glycine 79, aspartate 268, and aspartate 315.

Belongs to the PP2C family. It depends on Mg(2+) as a cofactor. Mn(2+) is required as a cofactor.

The enzyme catalyses O-phospho-L-seryl-[protein] + H2O = L-seryl-[protein] + phosphate. It catalyses the reaction O-phospho-L-threonyl-[protein] + H2O = L-threonyl-[protein] + phosphate. This is Probable protein phosphatase 2C 72 from Arabidopsis thaliana (Mouse-ear cress).